Here is a 243-residue protein sequence, read N- to C-terminus: NAD-dependent protein deacetylase (243 aa).

The Deacetylase sirtuin-type domain occupies 1–243; that stretch reads MRNDLETLKH…VSVVKSLMTE (243 aa). Residues A24, F35, R36, Q105, I107, D108, and H123 each contribute to the NAD(+) site. F35 contributes to the nicotinamide binding site. Nicotinamide is bound by residues I107 and D108. H123 (proton acceptor) is an active-site residue. C131, C134, C151, and C154 together coordinate Zn(2+). NAD(+) contacts are provided by S192, S193, N215, and D232.

This sequence belongs to the sirtuin family. Class U subfamily. Requires Zn(2+) as cofactor.

The protein resides in the cytoplasm. The catalysed reaction is N(6)-acetyl-L-lysyl-[protein] + NAD(+) + H2O = 2''-O-acetyl-ADP-D-ribose + nicotinamide + L-lysyl-[protein]. In terms of biological role, NAD-dependent protein deacetylase which modulates the activities of several enzymes which are inactive in their acetylated form. This chain is NAD-dependent protein deacetylase, found in Staphylococcus aureus (strain Mu50 / ATCC 700699).